Reading from the N-terminus, the 156-residue chain is Glutamate-rich protein 2 (156 aa).

Disordered stretches follow at residues 29–66 and 116–156; these read LQDI…TQAP and EKTQ…EDGS. Acidic residues-rich tracts occupy residues 39–56 and 140–156; these read SAED…DDED and SDEE…EDGS.

This is Glutamate-rich protein 2 (ERICH2) from Homo sapiens (Human).